Consider the following 108-residue polypeptide: Large ribosomal subunit protein P1B (108 aa).

Residues 72–84 (AGSASGAAAGGEA) show a composition bias toward low complexity. Positions 72–108 (AGSASGAAAGGEAAAEEAAEEEAAEESDDDMGFGLFD) are disordered. Residues 85–102 (AAEEAAEEEAAEESDDDM) show a composition bias toward acidic residues.

The protein belongs to the eukaryotic ribosomal protein P1/P2 family. In terms of assembly, P1 and P2 exist as dimers at the large ribosomal subunit. Post-translationally, phosphorylated.

Plays an important role in the elongation step of protein synthesis. This Candida albicans (Yeast) protein is Large ribosomal subunit protein P1B (RPP1B).